We begin with the raw amino-acid sequence, 237 residues long: MAKTGKKFRAAAALVDRDKRYAVAEGFQLLKKTVEARSTKYDQTVDVSINLGVDPKHADQMVRGAVVLPHGTGATVRVAVFAKGEKATDATNAGADVVGAEDLQKRIEEGFLDFDTVIATPDMMGVVGRLGKVLGPRGLMPNPKVGTVTMDVAKAIRDAKGGKVDFRAEKAGIVHAKLGKSSFEVEKLEANFNALVDLVMKLKPAAAKGVYLQGIAISSSMGPGIKLDTMEIKTRHG.

The protein belongs to the universal ribosomal protein uL1 family. In terms of assembly, part of the 50S ribosomal subunit.

Functionally, binds directly to 23S rRNA. The L1 stalk is quite mobile in the ribosome, and is involved in E site tRNA release. Its function is as follows. Protein L1 is also a translational repressor protein, it controls the translation of the L11 operon by binding to its mRNA. This Myxococcus xanthus (strain DK1622) protein is Large ribosomal subunit protein uL1.